A 64-amino-acid chain; its full sequence is Prokaryotic ubiquitin-like protein Pup (64 aa).

Positions 1–37 are disordered; sequence MAQEQTKRGGGGGEDDDLSGGAGAGQERREKLAEETD. Residues 21 to 58 are ARC ATPase binding; sequence GAGAGQERREKLAEETDDLLDEIDDVLEENAEDFVRAY. Positions 24–52 form a coiled coil; sequence AGQERREKLAEETDDLLDEIDDVLEENAE. Position 64 is a deamidated glutamine (Gln-64). Gln-64 participates in a covalent cross-link: Isoglutamyl lysine isopeptide (Gln-Lys) (interchain with K-? in acceptor proteins).

It belongs to the prokaryotic ubiquitin-like protein family. In terms of assembly, strongly interacts with the proteasome-associated ATPase ARC through a hydrophobic interface; the interacting region of Pup lies in its C-terminal half. There is one Pup binding site per ARC hexamer ring. In terms of processing, is modified by deamidation of its C-terminal glutamine to glutamate by the deamidase Dop, a prerequisite to the subsequent pupylation process.

It functions in the pathway protein degradation; proteasomal Pup-dependent pathway. Its function is as follows. Protein modifier that is covalently attached to lysine residues of substrate proteins, thereby targeting them for proteasomal degradation. The tagging system is termed pupylation. The polypeptide is Prokaryotic ubiquitin-like protein Pup (Mycobacterium sp. (strain JLS)).